The sequence spans 394 residues: Obg-like ATPase 1 (394 aa).

In terms of domain architecture, OBG-type G spans 25–282; that stretch reads LKIGIVGLPN…MAPDEAAKYC (258 aa). ATP is bound by residues 34–39, 56–60, and 94–97; these read NVGKST, FCTIE, and DIAG. Mg(2+) is bound by residues S38 and T58. F129 is a binding site for GTP. Residues 230–231, L231, and 263–265 contribute to the ATP site; these read NL and SGV. 263–265 provides a ligand contact to GTP; that stretch reads SGV. The TGS domain occupies 303–386; it reads NLIYFFTAGP…QDGDIIFFKF (84 aa).

It belongs to the TRAFAC class OBG-HflX-like GTPase superfamily. OBG GTPase family. YchF/OLA1 subfamily. In terms of assembly, monomer (Potential). Interacts with CAR4/GAP1. Requires Mg(2+) as cofactor.

It is found in the cytoplasm. The protein localises to the cytosol. Its activity is regulated as follows. Activated by GAP1. Hydrolyzes ATP, and can also hydrolyze GTP with lower efficiency. Has lower affinity for GTP (Potential). Exhibits GTPase activity. Confers sensitivity to salinity stress by suppressing the anti-oxidation enzymatic activities and increasing lipid peroxidation thus leading to the accumulation of reactive oxygen species (ROS). Acts as a negative regulator of disease resistance against bacterial pathogen. This Arabidopsis thaliana (Mouse-ear cress) protein is Obg-like ATPase 1.